The following is a 98-amino-acid chain: Capsid assembly scaffolding protein (98 aa).

Positions 40-62 (VSEYNDLTKSHEKLAAEKDDLIV) form a coiled coil.

Belongs to the phi29likevirus scaffolding protein family. Homodimer. Interacts non-specifically with DNA; probably binds DNA in the early stages of DNA packaging.

Scaffolding protein involved in the icosahedric procapsid assembly. Coassembles with the capsid proteins to form the procapsid. The scaffolding protein is found within the capsid as a serie of concentric shells. During DNA packaging, the scaffolding protein molecules are released from the procapsid. This Bacillus subtilis (Bacteriophage phi-29) protein is Capsid assembly scaffolding protein (7).